We begin with the raw amino-acid sequence, 118 residues long: UPF0342 protein BC_0880 (118 aa).

Belongs to the UPF0342 family.

The sequence is that of UPF0342 protein BC_0880 from Bacillus cereus (strain ATCC 14579 / DSM 31 / CCUG 7414 / JCM 2152 / NBRC 15305 / NCIMB 9373 / NCTC 2599 / NRRL B-3711).